We begin with the raw amino-acid sequence, 501 residues long: E3 ubiquitin-protein ligase TRIM35 (501 aa).

N-acetylmethionine is present on M1. Residue S8 is modified to Phosphoserine. The RING-type zinc-finger motif lies at C21–K61. The segment at R96 to I137 adopts a B box-type zinc-finger fold. C101, H104, C123, and H129 together coordinate Zn(2+). Positions V200–F252 form a coiled coil. Residues L284–I495 enclose the B30.2/SPRY domain.

Belongs to the TRIM/RBCC family. As to quaternary structure, interacts with PKM isoform M2, but not isoform M1; this interaction may compete with that between PKM and FGFR1, and hence reduces FGFR1-dependent tyrosine phosphorylation of PKM. Interacts with IRF7; this interaction promotes IRF7 proteasomal degradation. Interacts with TRAF3; this interaction promotes TRAF3 activation. As to expression, widely expressed. Highly expressed in brain, heart, kidney, spleen, skeletal muscle, lung and thymus. Lower expression found in stomach, large intestine and bone marrow.

The protein resides in the cytoplasm. Its subcellular location is the nucleus. The enzyme catalyses S-ubiquitinyl-[E2 ubiquitin-conjugating enzyme]-L-cysteine + [acceptor protein]-L-lysine = [E2 ubiquitin-conjugating enzyme]-L-cysteine + N(6)-ubiquitinyl-[acceptor protein]-L-lysine.. Its pathway is protein modification; protein ubiquitination. E3 ubiquitin-protein ligase that participates in multiple biological processes including cell death, glucose metabolism, and in particular, the innate immune response. Mediates 'Lys-63'-linked polyubiquitination of TRAF3 thereby promoting type I interferon production via RIG-I signaling pathway. Can also catalyze 'Lys-48'-linked polyubiquitination and proteasomal degradation of viral proteins such as influenza virus PB2. Acts as a negative feedback regulator of TLR7- and TLR9-triggered signaling. Mechanistically, promotes the 'Lys-48'-linked ubiquitination of IRF7 and induces its degradation via a proteasome-dependent pathway. Reduces FGFR1-dependent tyrosine phosphorylation of PKM, inhibiting PKM-dependent lactate production, glucose metabolism, and cell growth. This is E3 ubiquitin-protein ligase TRIM35 (Trim35) from Mus musculus (Mouse).